A 1135-amino-acid polypeptide reads, in one-letter code: Receptor-type guanylate cyclase gcy-4 (1135 aa).

A signal peptide spans 1–20 (MTQLLRFLLILSIFCDFSHS). At 21 to 483 (QRPTIRVGIA…CPIPFFDQYR (463 aa)) the chain is on the extracellular side. N-linked (GlcNAc...) asparagine glycosylation is found at Asn-37, Asn-193, Asn-209, Asn-251, Asn-349, Asn-375, Asn-431, Asn-436, and Asn-447. The helical transmembrane segment at 484–504 (LLIFVFVIVAGLLILAIFTCL) threads the bilayer. The Cytoplasmic segment spans residues 505–1135 (TSMVRNQRAE…VMRREMMRVS (631 aa)). Residues 535-560 (KGRRLSTDSENSTVTKSSKGSSSKNF) form a disordered region. The region spanning 545–837 (NSTVTKSSKG…KDNLMDHVFS (293 aa)) is the Protein kinase domain. The span at 546–560 (STVTKSSKGSSSKNF) shows a compositional bias: low complexity. Residues 895-1025 (TVFFSDLVKF…DTVNTASRME (131 aa)) form the Guanylate cyclase domain.

Belongs to the adenylyl cyclase class-4/guanylyl cyclase family. As to expression, expressed bilaterally in ASE neurons.

It localises to the cell membrane. The enzyme catalyses GTP = 3',5'-cyclic GMP + diphosphate. In terms of biological role, guanylate cyclase involved in the production of the second messenger cGMP. Regulates chemotaxis responses toward salt ions in ASE sensory neurons. This Caenorhabditis briggsae protein is Receptor-type guanylate cyclase gcy-4.